A 252-amino-acid chain; its full sequence is Ubiquinone/menaquinone biosynthesis C-methyltransferase UbiE (252 aa).

Residues threonine 71, aspartate 100, 124 to 125, and serine 141 contribute to the S-adenosyl-L-methionine site; that span reads DA.

It belongs to the class I-like SAM-binding methyltransferase superfamily. MenG/UbiE family.

The catalysed reaction is a 2-demethylmenaquinol + S-adenosyl-L-methionine = a menaquinol + S-adenosyl-L-homocysteine + H(+). It carries out the reaction a 2-methoxy-6-(all-trans-polyprenyl)benzene-1,4-diol + S-adenosyl-L-methionine = a 5-methoxy-2-methyl-3-(all-trans-polyprenyl)benzene-1,4-diol + S-adenosyl-L-homocysteine + H(+). Its pathway is quinol/quinone metabolism; menaquinone biosynthesis; menaquinol from 1,4-dihydroxy-2-naphthoate: step 2/2. The protein operates within cofactor biosynthesis; ubiquinone biosynthesis. Its function is as follows. Methyltransferase required for the conversion of demethylmenaquinol (DMKH2) to menaquinol (MKH2) and the conversion of 2-polyprenyl-6-methoxy-1,4-benzoquinol (DDMQH2) to 2-polyprenyl-3-methyl-6-methoxy-1,4-benzoquinol (DMQH2). The polypeptide is Ubiquinone/menaquinone biosynthesis C-methyltransferase UbiE (Caulobacter vibrioides (strain ATCC 19089 / CIP 103742 / CB 15) (Caulobacter crescentus)).